The sequence spans 531 residues: Putative lipase ATG15 (531 aa).

The Cytoplasmic segment spans residues 1–11 (MKPGIKISKRY). The chain crosses the membrane as a helical; Signal-anchor for type II membrane protein span at residues 12–31 (SARNASVITVLLLLIYLIYI). At 32-531 (NKETIQTKYQ…WIGICTEYGI (500 aa)) the chain is on the lumenal side. Residues Asn-178 and Asn-207 are each glycosylated (N-linked (GlcNAc...) asparagine). Ser-340 acts as the Charge relay system in catalysis. A disordered region spans residues 482 to 513 (VPKKHKSSSSTASSTSAETSTLTVGPSPPEKT). Low complexity predominate over residues 489–502 (SSSTASSTSAETST).

Belongs to the AB hydrolase superfamily. Lipase family. As to quaternary structure, binds to both phosphatidylinositol (PI) and phosphatidylinositol 3,5-bisphosphate (PIP2).

Its subcellular location is the endosome. The protein resides in the multivesicular body membrane. The protein localises to the prevacuolar compartment membrane. It carries out the reaction a triacylglycerol + H2O = a diacylglycerol + a fatty acid + H(+). Functionally, lipase which is essential for lysis of subvacuolar cytoplasm to vacuole targeted bodies and intravacuolar autophagic bodies. Involved in the lysis of intravacuolar multivesicular body (MVB) vesicles. The intravacuolar membrane disintegration by ATG15 is critical to life span extension. The polypeptide is Putative lipase ATG15 (ATG15) (Kluyveromyces lactis (strain ATCC 8585 / CBS 2359 / DSM 70799 / NBRC 1267 / NRRL Y-1140 / WM37) (Yeast)).